Reading from the N-terminus, the 365-residue chain is Methionine import ATP-binding protein MetN (365 aa).

The ABC transporter domain maps to 26–261 (VRLVDLKRRF…PQSDITKSLL (236 aa)). 58–65 (GRSGAGKS) lines the ATP pocket.

This sequence belongs to the ABC transporter superfamily. Methionine importer (TC 3.A.1.24) family. The complex is composed of two ATP-binding proteins (MetN), two transmembrane proteins (MetI) and a solute-binding protein (MetQ).

Its subcellular location is the cell inner membrane. The enzyme catalyses L-methionine(out) + ATP + H2O = L-methionine(in) + ADP + phosphate + H(+). It catalyses the reaction D-methionine(out) + ATP + H2O = D-methionine(in) + ADP + phosphate + H(+). Its function is as follows. Part of the ABC transporter complex MetNIQ involved in methionine import. Responsible for energy coupling to the transport system. This chain is Methionine import ATP-binding protein MetN, found in Mesorhizobium japonicum (strain LMG 29417 / CECT 9101 / MAFF 303099) (Mesorhizobium loti (strain MAFF 303099)).